Consider the following 387-residue polypeptide: Palmitoyltransferase ZDHHC16A (387 aa).

Transmembrane regions (helical) follow at residues 73 to 93 and 106 to 126; these read WFGM…VFIA and SPGW…MIVF. Positions 150 to 200 constitute a DHHC domain; the sequence is SVCKKCIIPKPARSHHCGICKTCILKMDHHCPWLNNCVGHFNHRYFFSFCL. Cys180 serves as the catalytic S-palmitoyl cysteine intermediate. The next 3 helical transmembrane spans lie at 198–218, 236–256, and 281–301; these read FCLF…HLFI, GVPV…GVAG, and VIYM…LTLW.

This sequence belongs to the DHHC palmitoyltransferase family. As to expression, expressed in the central nervous system (CNS). Expressed in the developing forebrain, and especially in the telencephalon.

It localises to the endoplasmic reticulum membrane. It carries out the reaction L-cysteinyl-[protein] + hexadecanoyl-CoA = S-hexadecanoyl-L-cysteinyl-[protein] + CoA. Palmitoyl acyltransferase that mediates palmitoylation of proteins and is required during embryonic heart development. Involved in the proliferation of neural stem cells by regulating the FGF/ERK pathway. Involved in the proliferation of neural stem cells by regulating the FGF/ERK pathway. This Danio rerio (Zebrafish) protein is Palmitoyltransferase ZDHHC16A.